A 199-amino-acid polypeptide reads, in one-letter code: Charged multivesicular body protein 1b (199 aa).

A coiled-coil region spans residues 26 to 48; that stretch reads DKEEKAEKAKIKKAIQKGNMEVA. The segment at 132-156 is interaction with IST1; it reads MEDTMSSTTTLTTPQGQVDMLLQEM. The tract at residues 167 to 199 is disordered; it reads ELPQGQTGSVGTSVASAEQDELSQRLARLRDQV. Positions 170–182 are enriched in polar residues; sequence QGQTGSVGTSVAS. The interval 174 to 199 is interaction with SPAST; it reads GSVGTSVASAEQDELSQRLARLRDQV. Residues 178-199 are a coiled coil; that stretch reads TSVASAEQDELSQRLARLRDQV. Residues 180–196 are interaction with VPS4A, MITD1 and STAMBP; sequence VASAEQDELSQRLARLR. An interaction with VTA1 region spans residues 180-199; that stretch reads VASAEQDELSQRLARLRDQV. The interaction with VPS4B stretch occupies residues 183–199; the sequence is AEQDELSQRLARLRDQV. An MIT-interacting motif motif is present at residues 186–196; the sequence is DELSQRLARLR.

This sequence belongs to the SNF7 family. In terms of assembly, probable peripherally associated component of the endosomal sorting required for transport complex III (ESCRT-III). ESCRT-III components are thought to multimerize to form a flat lattice on the perimeter membrane of the endosome. Several assembly forms of ESCRT-III may exist that interact and act sequentially. Interacts with CHMP1A. Interacts with VTA1; the interaction probably involves the open conformation of CHMP1B. Interacts with CHMP2A. Interacts with VPS4A; the interaction is direct. Interacts with VPS4B; the interaction is direct. Interacts with SPAST (via MIT domain); the interaction is direct. Interacts with IST1. Interacts with MITD1. Interacts with STAMBP.

Its subcellular location is the cytoplasm. The protein localises to the cytosol. It localises to the endosome. The protein resides in the late endosome membrane. Probable peripherally associated component of the endosomal sorting required for transport complex III (ESCRT-III) which is involved in multivesicular bodies (MVBs) formation and sorting of endosomal cargo proteins into MVBs. MVBs contain intraluminal vesicles (ILVs) that are generated by invagination and scission from the limiting membrane of the endosome and mostly are delivered to lysosomes enabling degradation of membrane proteins, such as stimulated growth factor receptors, lysosomal enzymes and lipids. The MVB pathway appears to require the sequential function of ESCRT-O, -I,-II and -III complexes. ESCRT-III proteins mostly dissociate from the invaginating membrane before the ILV is released. The ESCRT machinery also functions in topologically equivalent membrane fission events, such as the terminal stages of cytokinesis and the budding of enveloped viruses (lentiviruses). ESCRT-III proteins are believed to mediate the necessary vesicle extrusion and/or membrane fission activities, possibly in conjunction with the AAA ATPase VPS4. Involved in cytokinesis. Involved in recruiting VPS4A and/or VPS4B and SPAST to the midbody of dividing cells. The polypeptide is Charged multivesicular body protein 1b (CHMP1B) (Bos taurus (Bovine)).